An 83-amino-acid chain; its full sequence is Probable calcium-binding protein CML28 (83 aa).

2 EF-hand domains span residues 5 to 40 (TEKAEHDRIFKKFDANGDGKISAAELGDALKNLGSV) and 43 to 75 (EDIKRMMAEIDTDGDGYISYQEFIDFASANRGL). Residues Asp18, Asn20, Asp22, Lys24, Glu29, Asp53, Asp55, Asp57, Tyr59, and Glu64 each coordinate Ca(2+).

Potential calcium sensor. The sequence is that of Probable calcium-binding protein CML28 (CML28) from Arabidopsis thaliana (Mouse-ear cress).